A 797-amino-acid chain; its full sequence is Leucine-rich repeat-containing protein AAC1 (797 aa).

Basic and acidic residues predominate over residues 1–12 (MKRTSNRNEEAT). Disordered stretches follow at residues 1–20 (MKRT…SSTT), 51–103 (YSLF…TTTT), 125–148 (NLPT…TTTT), and 307–333 (HSTS…TITA). A compositionally biased stretch (polar residues) spans 55–81 (NEPNNDNDTNSSTRPNKQQKLLKSNES). Residues 82-103 (TTSTTTTTTPITTTTTTTTTTT) are compositionally biased toward low complexity. Over residues 313 to 326 (SSPPPPPPPPPPQI) the composition is skewed to pro residues. 10 LRR repeats span residues 376-397 (KLKK…DFFS), 406-425 (TLET…QLLS), 435-456 (VLKR…YLNK), 464-484 (QLET…IMMK), 492-513 (SLKE…DFGK), 514-535 (SITS…KGLS), 543-564 (SITS…KSLS), 572-593 (TLKF…DHLV), 601-622 (SIHS…TLSQ), and 633-653 (PFKY…KKLI).

In Dictyostelium discoideum (Social amoeba), this protein is Leucine-rich repeat-containing protein AAC1 (AAC1).